We begin with the raw amino-acid sequence, 194 residues long: Thymidylate kinase (194 aa).

Residue 7–14 coordinates ATP; the sequence is GVDGVGKS.

It belongs to the thymidylate kinase family.

The enzyme catalyses dTMP + ATP = dTDP + ADP. In terms of biological role, phosphorylation of dTMP to form dTDP in both de novo and salvage pathways of dTTP synthesis. This is Thymidylate kinase from Campylobacter curvus (strain 525.92).